Here is a 605-residue protein sequence, read N- to C-terminus: Replication and transcription activator (605 aa).

Disordered regions lie at residues 307–381 (SLPS…EPEQ) and 447–501 (RIRP…TPEA). Residues 321–338 (SADCGDSSSSSSDSGNSD) show a composition bias toward low complexity. Residues 341-353 (QSEREEARAEAPR) show a composition bias toward basic and acidic residues. Basic residues predominate over residues 355 to 364 (RAPKSRRTSR).

It belongs to the herpesviridae Rta family. As to quaternary structure, interacts with human ATF7IP protein, leading to promote and regulate host genes in virus-infected cells. Interacts with RNA polymerase III complex; this interaction downregulates small RNA transcription and 5'-pppRNA production.

It is found in the host nucleus. It localises to the virion tegument. In terms of biological role, immediate-early transcription factor that controls the initiation of viral lytic gene expression and lytic reactivation from latency. Triggers lytic replication, and initiates a cellular senescence program in epithelial cells. Up-regulates human DCR3/TNFRSF6B by directly binding to its receptor. Globally induces a proteasome-dependent loss of SUMOylated proteins in the host cell and the loss of promeylocytic leukemia nuclear bodies. Improves the stability of the triplex capsid protein TRX1 by reducing the ubiquitination level of the latter. Mediates evasion of inflammasome activation and antiviral responses (T- and NK cell activation) during EBV early lytic infection. In Epstein-Barr virus (strain GD1) (HHV-4), this protein is Replication and transcription activator.